We begin with the raw amino-acid sequence, 187 residues long: dCTP deaminase, dUMP-forming (187 aa).

DCTP contacts are provided by residues lysine 99 to arginine 104, aspartate 117, threonine 125 to glutamate 127, glutamine 146, tyrosine 159, lysine 166, and glutamine 170. Glutamate 127 serves as the catalytic Proton donor/acceptor.

Belongs to the dCTP deaminase family. In terms of assembly, homotrimer.

The enzyme catalyses dCTP + 2 H2O = dUMP + NH4(+) + diphosphate. It participates in pyrimidine metabolism; dUMP biosynthesis; dUMP from dCTP: step 1/1. Functionally, bifunctional enzyme that catalyzes both the deamination of dCTP to dUTP and the hydrolysis of dUTP to dUMP without releasing the toxic dUTP intermediate. This is dCTP deaminase, dUMP-forming from Methanoculleus marisnigri (strain ATCC 35101 / DSM 1498 / JR1).